The chain runs to 305 residues: UDP-N-acetylenolpyruvoylglucosamine reductase 2 (305 aa).

The FAD-binding PCMH-type domain occupies 33–197; the sequence is VGGKADVFVA…LEARFELEEG (165 aa). Residue arginine 176 is part of the active site. The active-site Proton donor is serine 226. Residue glutamate 296 is part of the active site.

It belongs to the MurB family. FAD is required as a cofactor.

It is found in the cytoplasm. It carries out the reaction UDP-N-acetyl-alpha-D-muramate + NADP(+) = UDP-N-acetyl-3-O-(1-carboxyvinyl)-alpha-D-glucosamine + NADPH + H(+). The protein operates within cell wall biogenesis; peptidoglycan biosynthesis. Cell wall formation. The chain is UDP-N-acetylenolpyruvoylglucosamine reductase 2 from Bacillus cereus (strain ZK / E33L).